The chain runs to 205 residues: Putative 3-methyladenine DNA glycosylase (205 aa).

This sequence belongs to the DNA glycosylase MPG family.

In Bacillus cereus (strain AH187), this protein is Putative 3-methyladenine DNA glycosylase.